A 2311-amino-acid chain; its full sequence is C2 domain-containing protein 3 (2311 aa).

Disordered stretches follow at residues 447-511 (SDSS…TSRC) and 543-562 (GTAVTPSKTNSRGRPPRPVR). Residues 470 to 509 (IALDRGRHRDNSPSEYKEDAKQTKGNDSLRDSKTSEKSTS) are compositionally biased toward basic and acidic residues. C2 domains are found at residues 508–666 (TSRC…SVTC), 751–888 (GNGG…TRLL), 952–1112 (LDPP…HRED), 1136–1303 (PSGL…SGWY), 1370–1505 (HKRE…TLAV), and 1581–1713 (KTEV…CGWY). Residues 939 to 964 (GTSQTAMPRPAHFLDPPLSSSQMGRP) form a disordered region. 5 disordered regions span residues 1536-1589 (PSNS…LLDA), 1955-1977 (SEAYEREGQRSDTPPFSPLGSLN), 2036-2065 (MTDRTSPWSSILSERDSDSMDHPQDQPVNP), 2084-2233 (NDPS…SNLL), and 2261-2292 (VREGRSDTPGIPFRRSKRQKPRLAPADLPKEE). Basic and acidic residues-rich tracts occupy residues 1565-1589 (FEEKQDDSAKNDKPEAKTEVPLLDA) and 1955-1964 (SEAYEREGQR). The span at 2036–2047 (MTDRTSPWSSIL) shows a compositional bias: polar residues. Positions 2048–2059 (SERDSDSMDHPQ) are enriched in basic and acidic residues. Residues 2084-2095 (NDPSSVLSSARS) show a composition bias toward polar residues. The span at 2138-2151 (AESEAESQEMDGDP) shows a compositional bias: acidic residues. Residues 2221 to 2233 (GSESPQVPPSNLL) show a composition bias toward polar residues.

The protein localises to the cytoplasm. The protein resides in the cytoskeleton. It localises to the cilium basal body. It is found in the microtubule organizing center. Its subcellular location is the centrosome. The protein localises to the centriole. Its function is as follows. Component of the centrioles that acts as a positive regulator of centriole elongation. Promotes assembly of centriolar distal appendage, a structure at the distal end of the mother centriole that acts as an anchor of the cilium. Required for primary cilium formation. This chain is C2 domain-containing protein 3 (c2cd3), found in Xenopus tropicalis (Western clawed frog).